Reading from the N-terminus, the 484-residue chain is Glutamate--tRNA ligase (484 aa).

Positions 11 to 21 (PSPTGYLHIGN) match the 'HIGH' region motif. Residues 252–256 (KLSKR) carry the 'KMSKS' region motif. K255 is an ATP binding site.

The protein belongs to the class-I aminoacyl-tRNA synthetase family. Glutamate--tRNA ligase type 1 subfamily. Monomer.

The protein resides in the cytoplasm. The catalysed reaction is tRNA(Glu) + L-glutamate + ATP = L-glutamyl-tRNA(Glu) + AMP + diphosphate. Catalyzes the attachment of glutamate to tRNA(Glu) in a two-step reaction: glutamate is first activated by ATP to form Glu-AMP and then transferred to the acceptor end of tRNA(Glu). The sequence is that of Glutamate--tRNA ligase from Staphylococcus aureus (strain Newman).